The sequence spans 349 residues: uncharacterized protein (349 aa).

The first 26 residues, M1–A26, serve as a signal peptide directing secretion. 2 disordered regions span residues G30–A113 and Y322–P349. The segment covering H39 to G52 has biased composition (polar residues). The segment covering N90–E101 has biased composition (pro residues).

Binds to numerous extracellular matrix proteins.

It localises to the secreted. It is found in the extracellular space. The protein resides in the extracellular matrix. This is an uncharacterized protein from Mus musculus (Mouse).